The primary structure comprises 161 residues: Probable chemoreceptor glutamine deamidase CheD (161 aa).

This sequence belongs to the CheD family.

It catalyses the reaction L-glutaminyl-[protein] + H2O = L-glutamyl-[protein] + NH4(+). Its function is as follows. Probably deamidates glutamine residues to glutamate on methyl-accepting chemotaxis receptors (MCPs), playing an important role in chemotaxis. This chain is Probable chemoreceptor glutamine deamidase CheD, found in Syntrophomonas wolfei subsp. wolfei (strain DSM 2245B / Goettingen).